A 226-amino-acid polypeptide reads, in one-letter code: ATP synthase subunit a (226 aa).

5 consecutive transmembrane segments (helical) span residues 17 to 37 (FLFVSHMFLAALLTLIVAKLA), 78 to 98 (LVATLGLFIFFANLMEIIPGF), 104 to 124 (NINFTLALALIVFIYYNFEGI), 175 to 195 (LFVWVLLMLAPWIVPLPGFAL), and 201 to 221 (FLQTFIFMILTYVYLAGAVLL).

This sequence belongs to the ATPase A chain family. F-type ATPases have 2 components, CF(1) - the catalytic core - and CF(0) - the membrane proton channel. CF(1) has five subunits: alpha(3), beta(3), gamma(1), delta(1), epsilon(1). CF(0) has three main subunits: a(1), b(2) and c(9-12). The alpha and beta chains form an alternating ring which encloses part of the gamma chain. CF(1) is attached to CF(0) by a central stalk formed by the gamma and epsilon chains, while a peripheral stalk is formed by the delta and b chains.

Its subcellular location is the cell inner membrane. Key component of the proton channel; it plays a direct role in the translocation of protons across the membrane. This is ATP synthase subunit a from Nitratiruptor sp. (strain SB155-2).